Reading from the N-terminus, the 223-residue chain is Glutathione S-transferase Z2 (223 aa).

A GST N-terminal domain is found at 10–91 (AKLKLYSYWR…YLDDKYPEPP (82 aa)). Glutathione is bound by residues 20 to 21 (SS), 20 to 25 (SSCAHR), Gln49, 49 to 50 (QS), 62 to 63 (TV), Val63, 75 to 76 (DS), Gln115, and 119 to 121 (NMA). The 126-residue stretch at 96-221 (DYHKRAVNYQ…VPEKQPDTPS (126 aa)) folds into the GST C-terminal domain.

Belongs to the GST superfamily. Zeta family.

Its subcellular location is the cytoplasm. The protein localises to the cytosol. The catalysed reaction is RX + glutathione = an S-substituted glutathione + a halide anion + H(+). In terms of biological role, may be involved in the conjugation of reduced glutathione to a wide number of exogenous and endogenous hydrophobic electrophiles and have a detoxification role against certain herbicides. The chain is Glutathione S-transferase Z2 (GSTZ2) from Arabidopsis thaliana (Mouse-ear cress).